The sequence spans 906 residues: Protein translocase subunit SecA (906 aa).

Residues Gln90, 108–112 (GEGKT), and Asp503 each bind ATP. The disordered stretch occupies residues 845-882 (TAAEAPASVPQPQAAVAPQPAPELVGADNGESQPQAWG). The span at 846-862 (AAEAPASVPQPQAAVAP) shows a compositional bias: low complexity. 4 residues coordinate Zn(2+): Cys890, Cys892, Cys901, and His902.

This sequence belongs to the SecA family. In terms of assembly, monomer and homodimer. Part of the essential Sec protein translocation apparatus which comprises SecA, SecYEG and auxiliary proteins SecDF-YajC and YidC. Zn(2+) serves as cofactor.

Its subcellular location is the cell inner membrane. The protein resides in the cytoplasm. It carries out the reaction ATP + H2O + cellular proteinSide 1 = ADP + phosphate + cellular proteinSide 2.. In terms of biological role, part of the Sec protein translocase complex. Interacts with the SecYEG preprotein conducting channel. Has a central role in coupling the hydrolysis of ATP to the transfer of proteins into and across the cell membrane, serving both as a receptor for the preprotein-SecB complex and as an ATP-driven molecular motor driving the stepwise translocation of polypeptide chains across the membrane. The protein is Protein translocase subunit SecA of Cereibacter sphaeroides (strain ATCC 17025 / ATH 2.4.3) (Rhodobacter sphaeroides).